A 283-amino-acid chain; its full sequence is uncharacterized protein (283 aa).

Positions 1-10 (MEVNKTTESL) are enriched in polar residues. 2 disordered regions span residues 1 to 96 (MEVN…SGGN) and 255 to 283 (DQEG…EAQI). Composition is skewed to basic and acidic residues over residues 14-34 (KVEH…RDVK) and 44-81 (SKQE…VSSR).

Belongs to the chlamydial CPn_0705/CT_671/TC_0042 family.

This is an uncharacterized protein from Chlamydia muridarum (strain MoPn / Nigg).